Reading from the N-terminus, the 544-residue chain is NEDD4-binding protein 3 (544 aa).

Disordered stretches follow at residues 61–84, 116–252, 335–365, and 430–465; these read LPKK…ADYA, SVFK…EFSC, KELR…PEEE, and QEQA…RDSA. Serine 176 bears the Phosphoserine mark. Residues 186-222 show a composition bias toward low complexity; sequence PSLSDSSSGGSFGRSPGTGPSPFSSSLGHLNHLGGSL. Residues 294-530 are a coiled coil; it reads LAELKRLYVE…LEQELRALRE (237 aa).

The protein belongs to the N4BP3 family. Binds NEDD4. Interacts with 14-3-3 proteins. Interacts with MAVS.

The protein resides in the cytoplasmic vesicle. It localises to the cell projection. It is found in the axon. The protein localises to the dendrite. Functionally, plays a positive role in the antiviral innate immune signaling pathway. Mechanistically, interacts with MAVS and functions as a positive regulator to promote 'Lys-63'-linked polyubiquitination of MAVS and thus strengthens the interaction between MAVS and TRAF2. Also plays a role in axon and dendrite arborization during cranial nerve development. May also be important for neural crest migration and early development of other anterior structures including eye, brain and cranial cartilage. In Homo sapiens (Human), this protein is NEDD4-binding protein 3 (N4BP3).